A 356-amino-acid polypeptide reads, in one-letter code: Phosphoribosylformylglycinamidine cyclo-ligase (356 aa).

It belongs to the AIR synthase family.

The protein resides in the cytoplasm. The enzyme catalyses 2-formamido-N(1)-(5-O-phospho-beta-D-ribosyl)acetamidine + ATP = 5-amino-1-(5-phospho-beta-D-ribosyl)imidazole + ADP + phosphate + H(+). Its pathway is purine metabolism; IMP biosynthesis via de novo pathway; 5-amino-1-(5-phospho-D-ribosyl)imidazole from N(2)-formyl-N(1)-(5-phospho-D-ribosyl)glycinamide: step 2/2. The protein is Phosphoribosylformylglycinamidine cyclo-ligase of Acinetobacter baumannii (strain AB307-0294).